The chain runs to 256 residues: Ribonuclease HII (256 aa).

One can recognise an RNase H type-2 domain in the interval 72 to 256 (QYIAGMDEVG…SFNPVPKYLN (185 aa)). Residues Asp-78, Glu-79, and Asp-170 each coordinate a divalent metal cation.

The protein belongs to the RNase HII family. Mn(2+) is required as a cofactor. It depends on Mg(2+) as a cofactor.

It localises to the cytoplasm. It catalyses the reaction Endonucleolytic cleavage to 5'-phosphomonoester.. Endonuclease that specifically degrades the RNA of RNA-DNA hybrids. This Limosilactobacillus reuteri (strain DSM 20016) (Lactobacillus reuteri) protein is Ribonuclease HII.